A 130-amino-acid chain; its full sequence is Albumin-1 F (130 aa).

The signal sequence occupies residues 1–26; sequence MASVKLASLIVLFATLGMFLTKNVGA. Intrachain disulfides connect Cys-29-Cys-46, Cys-33-Cys-48, and Cys-41-Cys-58. Propeptides lie at residues 64 to 69 and 123 to 130; these read VFLRTN and LLKSVSTA.

Post-translationally, the C-terminal glycine may be removed from PA1b.

Its function is as follows. PA1b binds to basic 7S globulin (BG) and stimulates its phosphorylation activity. Involved in the signal transduction system to regulate the growth and differentiation as a hormone peptide. Toxic to various insects through binding to a high affinity binding site in the insect gut. In Pisum sativum (Garden pea), this protein is Albumin-1 F.